The following is a 163-amino-acid chain: Nucleotide-binding protein MAV_4575 (163 aa).

Belongs to the YajQ family.

In terms of biological role, nucleotide-binding protein. In Mycobacterium avium (strain 104), this protein is Nucleotide-binding protein MAV_4575.